A 293-amino-acid chain; its full sequence is Shikimate dehydrogenase (NADP(+)) (293 aa).

Residues 20 to 22 (SLT) and Thr-72 contribute to the shikimate site. The Proton acceptor role is filled by Lys-76. Residues Asn-97 and Asp-112 each coordinate shikimate. Residues 136-140 (GAGGA) and Ile-230 each bind NADP(+). Tyr-232 serves as a coordination point for shikimate. NADP(+) is bound at residue Gly-253.

Belongs to the shikimate dehydrogenase family. Homodimer.

It catalyses the reaction shikimate + NADP(+) = 3-dehydroshikimate + NADPH + H(+). It functions in the pathway metabolic intermediate biosynthesis; chorismate biosynthesis; chorismate from D-erythrose 4-phosphate and phosphoenolpyruvate: step 4/7. Its function is as follows. Involved in the biosynthesis of the chorismate, which leads to the biosynthesis of aromatic amino acids. Catalyzes the reversible NADPH linked reduction of 3-dehydroshikimate (DHSA) to yield shikimate (SA). This chain is Shikimate dehydrogenase (NADP(+)), found in Pseudarthrobacter chlorophenolicus (strain ATCC 700700 / DSM 12829 / CIP 107037 / JCM 12360 / KCTC 9906 / NCIMB 13794 / A6) (Arthrobacter chlorophenolicus).